The primary structure comprises 358 residues: Oxidase FUB9 (358 aa).

Positions 6 to 350 constitute an FMN hydroxy acid dehydrogenase domain; that stretch reads SSKPQIFSIQ…SPAHLSILNA (345 aa). Position 32 (Tyr32) interacts with a 2-oxocarboxylate. FMN is bound by residues Ser114, Gln138, and Thr166. A 2-oxocarboxylate is bound at residue Arg175. Lys221 contacts FMN. His245 acts as the Proton acceptor in catalysis. Arg248 contributes to the a 2-oxocarboxylate binding site. FMN-binding positions include 276-280 and 299-300; these read DGGFR and GR.

This sequence belongs to the FMN-dependent alpha-hydroxy acid dehydrogenase family. FMN serves as cofactor.

Its pathway is mycotoxin biosynthesis. In terms of biological role, oxidase; part of the gene cluster that mediates the biosynthesis of fusaric acid, a mycotoxin with low to moderate toxicity to animals and humans, but with high phytotoxic properties. L-aspartate is suggested as fusaric acid amino acid precursor that is activated and further processed to O-acetyl-L-homoserine by cluster enzymes aspartate kinase FUB3 and homoserine O-acetyltransferase FUB5, as well as enzymes of the primary metabolism. The polyketide synthase (PKS) FUB1 generates the triketide trans-2-hexenal which is presumptively released by the hydrolase FUB4 and linked to the NRPS-bound amino acid precursor by NAD(P)-dependent dehydrogenase FUB6. FUB1, FUB4, and the non-canonical NRPS Fub8 may form an enzyme complex. Further processing of the NRPS-bound intermediate might be carried out by FUB6 and the sulfhydrylase FUB7, enabling a spontaneous electrocyclization to close the carbon backbone of fusaric acid. Dihydrofusaric acid is likely to be released via reduction by the thioester reductase (TR) domain of FUB8 whereupon the final oxidation to fusaric acid may (also) be performed by the FMN-dependent dehydrogenase FUB9. The sequence is that of Oxidase FUB9 from Gibberella fujikuroi (strain CBS 195.34 / IMI 58289 / NRRL A-6831) (Bakanae and foot rot disease fungus).